A 475-amino-acid polypeptide reads, in one-letter code: 3-isopropylmalate dehydratase large subunit (475 aa).

[4Fe-4S] cluster contacts are provided by Cys352, Cys413, and Cys416.

Belongs to the aconitase/IPM isomerase family. LeuC type 1 subfamily. In terms of assembly, heterodimer of LeuC and LeuD. It depends on [4Fe-4S] cluster as a cofactor.

The enzyme catalyses (2R,3S)-3-isopropylmalate = (2S)-2-isopropylmalate. It participates in amino-acid biosynthesis; L-leucine biosynthesis; L-leucine from 3-methyl-2-oxobutanoate: step 2/4. Catalyzes the isomerization between 2-isopropylmalate and 3-isopropylmalate, via the formation of 2-isopropylmaleate. The polypeptide is 3-isopropylmalate dehydratase large subunit (Pseudomonas syringae pv. tomato (strain ATCC BAA-871 / DC3000)).